The primary structure comprises 270 residues: Chlorophyll a-b binding protein, chloroplastic (270 aa).

The N-terminal 41 residues, 1 to 41, are a transit peptide targeting the chloroplast; sequence MASACASSTIAAVAFSSPSSQKNGSIVGATKASFLGGKRLR. Residue Trp68 participates in chlorophyll b binding. 3 residues coordinate chlorophyll a: Phe88, Glu107, and His110. Arg112 is a chlorophyll b binding site. A helical membrane pass occupies residues 113 to 133; it reads WAMLGAAGIFIPEFLTKIGVL. Residue Gln144 participates in chlorophyll a binding. A helical membrane pass occupies residues 146 to 166; the sequence is YFTDTTTLFVIELVLIGWAEG. Residues Val155, Glu165, and Arg168 each contribute to the chlorophyll b site. Chlorophyll a contacts are provided by Lys221, Glu222, Asn225, Arg227, Gln239, and His254. Residues 228–248 traverse the membrane as a helical segment; sequence LAMLAVMGAWFQHIYTGTGPI.

It belongs to the light-harvesting chlorophyll a/b-binding (LHC) protein family. As to quaternary structure, the LHC complex consists of chlorophyll a-b binding proteins. It depends on Binds at least 14 chlorophylls (8 Chl-a and 6 Chl-b) and carotenoids such as lutein and neoxanthin. as a cofactor. Photoregulated by reversible phosphorylation of its threonine residues.

It is found in the plastid. The protein localises to the chloroplast thylakoid membrane. The light-harvesting complex (LHC) functions as a light receptor, it captures and delivers excitation energy to photosystems with which it is closely associated. In Petunia hybrida (Petunia), this protein is Chlorophyll a-b binding protein, chloroplastic.